Reading from the N-terminus, the 376-residue chain is Immunoglobulin G-binding protein H (376 aa).

The N-terminal stretch at 1 to 41 is a signal peptide; that stretch reads MTRQQTKKNYSLRKLKTGTASVAVALTVLGAGFANQTTVKA. The tract at residues 69-271 is disordered; sequence TSLENEKLKS…AAKKELEANH (203 aa). Composition is skewed to basic and acidic residues over residues 72 to 146, 156 to 203, 211 to 245, and 253 to 271; these read ENEK…KRYQ, ETEK…DKQI, LSRD…DKQI, and LSRD…EANH. C repeat units lie at residues 153-187, 195-229, and 237-271; these read QQLE…EAEH and QKLK…EANH. 4 D repeats span residues 272–277, 278–283, 286–291, and 293–298; these read QKLEAE, AKALKE, AKQAEE, and AKLRAG. Residues 292-348 form a disordered region; that stretch reads LAKLRAGKASDSQTPDTKPGNKAVPGKGQAPQAGTKPNQNKAPMKETKRQLPSTGET. Positions 342–346 match the LPXTG sorting signal motif; sequence LPSTG. A Pentaglycyl murein peptidoglycan amidated threonine modification is found at T345. The propeptide at 346–376 is removed by sortase; that stretch reads GETANPFFTAAALTVMATAGVAAVVKRKEEN.

Belongs to the M protein family.

Its subcellular location is the secreted. It localises to the cell wall. The polypeptide is Immunoglobulin G-binding protein H (Streptococcus pyogenes serotype M1).